A 112-amino-acid chain; its full sequence is Transmembrane protein 14 homolog (112 aa).

4 helical membrane passes run 9–26 (FKLN…GVIG), 36–53 (LIAG…AYYL), 60–77 (VGLG…GVMG), and 87–109 (IPII…LYNI).

Belongs to the TMEM14 family.

The protein resides in the membrane. The chain is Transmembrane protein 14 homolog from Dictyostelium discoideum (Social amoeba).